The sequence spans 300 residues: Bifunctional protein FolD 2 (300 aa).

NADP(+)-binding positions include 165–167, Ser-190, and Ile-231; that span reads GRS.

This sequence belongs to the tetrahydrofolate dehydrogenase/cyclohydrolase family. In terms of assembly, homodimer.

The enzyme catalyses (6R)-5,10-methylene-5,6,7,8-tetrahydrofolate + NADP(+) = (6R)-5,10-methenyltetrahydrofolate + NADPH. The catalysed reaction is (6R)-5,10-methenyltetrahydrofolate + H2O = (6R)-10-formyltetrahydrofolate + H(+). It participates in one-carbon metabolism; tetrahydrofolate interconversion. Catalyzes the oxidation of 5,10-methylenetetrahydrofolate to 5,10-methenyltetrahydrofolate and then the hydrolysis of 5,10-methenyltetrahydrofolate to 10-formyltetrahydrofolate. The polypeptide is Bifunctional protein FolD 2 (Pseudomonas savastanoi pv. phaseolicola (strain 1448A / Race 6) (Pseudomonas syringae pv. phaseolicola (strain 1448A / Race 6))).